The chain runs to 75 residues: Small ribosomal subunit protein bS18 (75 aa).

The protein belongs to the bacterial ribosomal protein bS18 family. Part of the 30S ribosomal subunit. Forms a tight heterodimer with protein bS6.

Functionally, binds as a heterodimer with protein bS6 to the central domain of the 16S rRNA, where it helps stabilize the platform of the 30S subunit. The protein is Small ribosomal subunit protein bS18 of Cereibacter sphaeroides (strain ATCC 17029 / ATH 2.4.9) (Rhodobacter sphaeroides).